The primary structure comprises 138 residues: DNA-directed RNA polymerase subunit omega (138 aa).

The tract at residues 117–138 is disordered; it reads NLLGRDNFFSTPENRNTSNTDS. A compositionally biased stretch (polar residues) spans 124 to 138; sequence FFSTPENRNTSNTDS.

The protein belongs to the RNA polymerase subunit omega family. As to quaternary structure, the RNAP catalytic core consists of 2 alpha, 1 beta, 1 beta' and 1 omega subunit. When a sigma factor is associated with the core the holoenzyme is formed, which can initiate transcription.

The catalysed reaction is RNA(n) + a ribonucleoside 5'-triphosphate = RNA(n+1) + diphosphate. Functionally, promotes RNA polymerase assembly. Latches the N- and C-terminal regions of the beta' subunit thereby facilitating its interaction with the beta and alpha subunits. This chain is DNA-directed RNA polymerase subunit omega, found in Ehrlichia canis (strain Jake).